Here is a 662-residue protein sequence, read N- to C-terminus: Polyunsaturated fatty acid lipoxygenase ALOX15 (662 aa).

Residues 2–114 (GLYRIRVSTG…VLSLPEGTGR (113 aa)) form the PLAT domain. One can recognise a Lipoxygenase domain in the interval 115–662 (TVGEDPQGLF…PSVVENSVAI (548 aa)). Positions 360, 365, 540, 544, and 662 each coordinate Fe cation.

The protein belongs to the lipoxygenase family. Interacts with PEBP1; in response to IL13/interleukin-13, prevents the interaction of PEBP1 with RAF1 to activate the ERK signaling cascade. Fe cation is required as a cofactor. As to expression, detected in monocytes and eosinophils (at protein level). Expressed in airway epithelial cells.

It is found in the cytoplasm. The protein localises to the cytosol. The protein resides in the cell membrane. It localises to the lipid droplet. The catalysed reaction is (5Z,8Z,11Z,14Z)-eicosatetraenoate + O2 = (12S)-hydroperoxy-(5Z,8Z,10E,14Z)-eicosatetraenoate. The enzyme catalyses (5Z,8Z,11Z,14Z)-eicosatetraenoate + O2 = (15S)-hydroperoxy-(5Z,8Z,11Z,13E)-eicosatetraenoate. It carries out the reaction (9Z,12Z)-octadecadienoate + O2 = (13S)-hydroperoxy-(9Z,11E)-octadecadienoate. It catalyses the reaction (5Z,8Z,11Z,14Z)-eicosatetraenoate + 2 O2 = (14R,15S)-dihydroperoxy-(5Z,8Z,10E,12E)-eicosatetraenoate. The catalysed reaction is (5Z,8Z,11Z,14Z)-eicosatetraenoate + 2 O2 = (8S,15S)-dihydroperoxy-(5Z,9E,11Z,13E)-eicosatetraenoate. The enzyme catalyses (14S,15R)-epoxy-(5Z,8Z,11Z)-eicosatrienoate + O2 = (8S)-hydroperoxy-(14S,15R)-epoxy-(5Z,9E,11Z)-eicosatrienoate. It carries out the reaction (14S,15R)-epoxy-(5Z,8Z,11Z)-eicosatrienoate + O2 = (12S)-hydroperoxy-(14S,15R)-epoxy-(5Z,8Z,10E)-eicosatrienoate. It catalyses the reaction (14R,15S)-epoxy-(5Z,8Z,11Z)-eicosatrienoate + O2 = (5S)-hydroperoxy-(14R,15S)-epoxy-(6E,8Z,11Z)-eicosatrienoate. The catalysed reaction is (14R,15S)-epoxy-(5Z,8Z,11Z)-eicosatrienoate + O2 = (12S)-hydroperoxy-(14R,15S)-epoxy-(5Z,8Z,10E)-eicosatrienoate. The enzyme catalyses (15R)-hydroperoxy-(5Z,8Z,11Z,13E)-eicosatetraenoate = 15-oxo-(5Z,8Z,11Z,13E)-eicosatetraenoate + H2O. It carries out the reaction (15S)-hydroperoxy-(5Z,8Z,11Z,13E)-eicosatetraenoate = (14S,15S)-epoxy-(5Z,8Z,10E,12E)-eicosatetraenoate + H2O. It catalyses the reaction (12S)-hydroperoxy-(5Z,8Z,10E,14Z)-eicosatetraenoate = (8S)-hydroxy-(11S,12S)-epoxy-(5Z,9E,14Z)-eicosatrienoate. The catalysed reaction is (4Z,7Z,10Z,13Z,16Z,19Z)-docosahexaenoate + O2 = (14S)-hydroperoxy-(4Z,7Z,10Z,12E,16Z,19Z)-docosahexaenoate. The enzyme catalyses (4Z,7Z,10Z,13Z,16Z,19Z)-docosahexaenoate + O2 = (17S)-hydroperoxy-(4Z,7Z,10Z,13Z,15E,19Z)-docosahexaenoate. It carries out the reaction (7S)-hydroperoxy-(4Z,8E,10Z,13Z,16Z,19Z)-docosahexaenoate + O2 = (7S,14S)-dihydroperoxy-(4Z,8E,10Z,12E,16Z,19Z)-docosahexaenoate. It catalyses the reaction (7S)-hydroperoxy-(4Z,8E,10Z,13Z,16Z,19Z)-docosahexaenoate + O2 = (7S,17S)-dihydroperoxy-(4Z,8E,10Z,13Z,15E,19Z)-docosahexaenoate. The catalysed reaction is (4Z,7Z,10Z,13Z,16Z,19Z)-docosahexaenoate + O2 = (11S)-hydroperoxy-(4Z,7Z,9E,13Z,16Z,19Z)-docosahexaenoate. The enzyme catalyses (7Z,10Z,13Z,16Z,19Z)-docosapentaenoate + O2 = 14-hydroperoxy-(7Z,10Z,12E,16Z,19Z)-docosapentaenoate. It carries out the reaction (4Z,7Z,10Z,13Z,16Z)-docosapentaenoate + O2 = 14-hydroperoxy-(4Z,7Z,10Z,12E,16Z)-docosapentaenoate. It catalyses the reaction N-(5Z,8Z,11Z,14Z)-eicosatetraenoyl-taurine + O2 = N-(12S)-hydroperoxy-(5Z,8Z,10E,14Z)-eicosatetraenoyl-taurine. The catalysed reaction is N-(5Z,8Z,11Z,14Z)-eicosatetraenoyl-gamma-aminobutanoate + O2 = N-(12S)-hydroperoxy-(5Z,8Z,10E,14Z)-eicosatetraenoyl-gamma-aminobutanoate. The enzyme catalyses N-(5Z,8Z,11Z,14Z)-eicosatetraenoyl-glycine + O2 = N-(12S)-hydroperoxy-(5Z,8Z,10E,14Z)-eicosatetraenoyl-glycine. It carries out the reaction N-(5Z,8Z,11Z,14Z)-eicosatetraenoyl-L-alanine + O2 = N-(12S)-hydroperoxy-(5Z,8Z,10E,14Z)-eicosatetraenoyl-alanine. It catalyses the reaction N-(5Z,8Z,11Z,14Z)-eicosatetraenoyl-taurine + O2 = N-(15S)-hydroperoxy-(5Z,8Z,11Z,13E)-eicosatetraenoyl-taurine. The catalysed reaction is N-(5Z,8Z,11Z,14Z)-eicosatetraenoyl-gamma-aminobutanoate + O2 = N-(15S)-hydroperoxy-(5Z,8Z,11Z,13E)-eicosatetraenoyl-gamma-aminobutanoate. The enzyme catalyses N-(5Z,8Z,11Z,14Z)-eicosatetraenoyl-glycine + O2 = N-(15S)-hydroperoxy-(5Z,8Z,11Z,13E)-eicosatetraenoyl-glycine. It carries out the reaction N-(5Z,8Z,11Z,14Z)-eicosatetraenoyl-L-alanine + O2 = N-(15S)-hydroperoxy-(5Z,8Z,11Z,13E)-eicosatetraenoyl-alanine. The protein operates within lipid metabolism; hydroperoxy eicosatetraenoic acid biosynthesis. Its activity is regulated as follows. Activity is increased by binding phosphatidylinositol phosphates, especially phosphatidylinositol 3,4-bisphosphate and phosphatidylinositol 4,5-bisphosphate. Inactivated at 37 degrees Celsius by (13S)-hydroperoxy-(9Z,11E)-octadecadienoate. Functionally, non-heme iron-containing dioxygenase that catalyzes the stereo-specific peroxidation of free and esterified polyunsaturated fatty acids generating a spectrum of bioactive lipid mediators. It inserts peroxyl groups at C12 or C15 of arachidonate ((5Z,8Z,11Z,14Z)-eicosatetraenoate) producing both 12-hydroperoxyeicosatetraenoate/12-HPETE and 15-hydroperoxyeicosatetraenoate/15-HPETE. It may then act on 12-HPETE to produce hepoxilins, which may show pro-inflammatory properties. Can also peroxidize linoleate ((9Z,12Z)-octadecadienoate) to 13-hydroperoxyoctadecadienoate/13-HPODE. May participate in the sequential oxidations of DHA ((4Z,7Z,10Z,13Z,16Z,19Z)-docosahexaenoate) to generate specialized pro-resolving mediators (SPMs)like resolvin D5 ((7S,17S)-diHPDHA) and (7S,14S)-diHPDHA, that actively down-regulate the immune response and have anti-aggregation properties with platelets. Can convert epoxy fatty acids to hydroperoxy-epoxides derivatives followed by an intramolecular nucleophilic substitution leading to the formation of monocyclic endoperoxides. Plays an important role during the maintenance of self-tolerance by peroxidizing membrane-bound phosphatidylethanolamine which can then signal the sorting process for clearance of apoptotic cells during inflammation and prevent an autoimmune response. In addition to its role in the immune and inflammatory responses, this enzyme may play a role in epithelial wound healing in the cornea through production of lipoxin A4 (LXA(4)) and docosahexaenoic acid-derived neuroprotectin D1 (NPD1; 10R,17S-HDHA), both lipid autacoids exhibit anti-inflammatory and neuroprotective properties. Furthermore, it may regulate actin polymerization which is crucial for several biological processes such as the phagocytosis of apoptotic cells. It is also implicated in the generation of endogenous ligands for peroxisome proliferator activated receptor (PPAR-gamma), hence modulating macrophage development and function. It may also exert a negative effect on skeletal development by regulating bone mass through this pathway. As well as participates in ER stress and downstream inflammation in adipocytes, pancreatic islets, and liver. Finally, it is also involved in the cellular response to IL13/interleukin-13. This is Polyunsaturated fatty acid lipoxygenase ALOX15 from Homo sapiens (Human).